The primary structure comprises 246 residues: Protein phosphatase PhpP (246 aa).

In terms of domain architecture, PPM-type phosphatase spans 2–240 (EISLLTDVGQ…DNITVALVSM (239 aa)). Aspartate 36, glycine 37, aspartate 192, and aspartate 231 together coordinate Mn(2+).

It belongs to the PP2C family. It depends on Mn(2+) as a cofactor.

Its subcellular location is the cytoplasm. The catalysed reaction is O-phospho-L-seryl-[protein] + H2O = L-seryl-[protein] + phosphate. The enzyme catalyses O-phospho-L-threonyl-[protein] + H2O = L-threonyl-[protein] + phosphate. In terms of biological role, protein phosphatase able to dephosphorylate StkP-P and other phosphorylated protein substrates. PhpP and its cognate protein kinase StkP appear to constitute a functional signaling couple in vivo, PhpP's primary role being probably to control phosphorylation levels of StkP and of its targets. PhpP thus performs an essential control of StkP activity. Also dephosphorylates DivIVA in vivo. This Streptococcus pneumoniae serotype 2 (strain D39 / NCTC 7466) protein is Protein phosphatase PhpP (phpP).